Here is a 360-residue protein sequence, read N- to C-terminus: Photosystem II protein D1 (360 aa).

3 helical membrane passes run 29–46, 118–133, and 142–156; these read YIGW…SAIA, HFLI…EWEL, and WICV…AATA. H118 is a binding site for chlorophyll a. Position 126 (Y126) interacts with pheophytin a. [CaMn4O5] cluster-binding residues include D170 and E189. A helical membrane pass occupies residues 197 to 218; sequence FHMLGVAGVFGGSLFSAMHGSL. Residue H198 participates in chlorophyll a binding. Residues H215 and 264–265 contribute to the a quinone site; that span reads SF. Residue H215 participates in Fe cation binding. Residue H272 participates in Fe cation binding. Residues 274–288 traverse the membrane as a helical segment; it reads FLAAWPVIGIWFTAL. H332, E333, D342, and A344 together coordinate [CaMn4O5] cluster. A propeptide spanning residues 345–360 is cleaved from the precursor; it reads AGDVAPVALTAPPING.

This sequence belongs to the reaction center PufL/M/PsbA/D family. As to quaternary structure, PSII is composed of 1 copy each of membrane proteins PsbA, PsbB, PsbC, PsbD, PsbE, PsbF, PsbH, PsbI, PsbJ, PsbK, PsbL, PsbM, PsbT, PsbX, PsbY, PsbZ, Psb30/Ycf12, peripheral proteins PsbO, CyanoQ (PsbQ), PsbU, PsbV and a large number of cofactors. It forms dimeric complexes. The D1/D2 heterodimer binds P680, chlorophylls that are the primary electron donor of PSII, and subsequent electron acceptors. It shares a non-heme iron and each subunit binds pheophytin, quinone, additional chlorophylls, carotenoids and lipids. D1 provides most of the ligands for the Mn4-Ca-O5 cluster of the oxygen-evolving complex (OEC). There is also a Cl(-1) ion associated with D1 and D2, which is required for oxygen evolution. The PSII complex binds additional chlorophylls, carotenoids and specific lipids. serves as cofactor. Post-translationally, tyr-161 forms a radical intermediate that is referred to as redox-active TyrZ, YZ or Y-Z. C-terminally processed by CtpA; processing is essential to allow assembly of the oxygen-evolving complex and thus photosynthetic growth.

The protein localises to the cellular thylakoid membrane. The catalysed reaction is 2 a plastoquinone + 4 hnu + 2 H2O = 2 a plastoquinol + O2. Photosystem II (PSII) is a light-driven water:plastoquinone oxidoreductase that uses light energy to abstract electrons from H(2)O, generating O(2) and a proton gradient subsequently used for ATP formation. It consists of a core antenna complex that captures photons, and an electron transfer chain that converts photonic excitation into a charge separation. The D1/D2 (PsbA/PsbD) reaction center heterodimer binds P680, the primary electron donor of PSII as well as several subsequent electron acceptors. This is Photosystem II protein D1 from Trichormus azollae (Anabaena azollae).